We begin with the raw amino-acid sequence, 301 residues long: Lipoyl synthase (301 aa).

[4Fe-4S] cluster contacts are provided by C50, C55, C61, C76, C80, C83, and S289. One can recognise a Radical SAM core domain in the interval 62 to 278 (WNHRTATFLL…RRYALERGFR (217 aa)).

Belongs to the radical SAM superfamily. Lipoyl synthase family. Requires [4Fe-4S] cluster as cofactor.

The protein localises to the cytoplasm. The catalysed reaction is [[Fe-S] cluster scaffold protein carrying a second [4Fe-4S](2+) cluster] + N(6)-octanoyl-L-lysyl-[protein] + 2 oxidized [2Fe-2S]-[ferredoxin] + 2 S-adenosyl-L-methionine + 4 H(+) = [[Fe-S] cluster scaffold protein] + N(6)-[(R)-dihydrolipoyl]-L-lysyl-[protein] + 4 Fe(3+) + 2 hydrogen sulfide + 2 5'-deoxyadenosine + 2 L-methionine + 2 reduced [2Fe-2S]-[ferredoxin]. It functions in the pathway protein modification; protein lipoylation via endogenous pathway; protein N(6)-(lipoyl)lysine from octanoyl-[acyl-carrier-protein]: step 2/2. Functionally, catalyzes the radical-mediated insertion of two sulfur atoms into the C-6 and C-8 positions of the octanoyl moiety bound to the lipoyl domains of lipoate-dependent enzymes, thereby converting the octanoylated domains into lipoylated derivatives. In Roseiflexus sp. (strain RS-1), this protein is Lipoyl synthase.